The chain runs to 120 residues: MPLPCIPPPPVSRDTAACIAWLGLAHASCVDTLRFIKHHDLKITPEAEYILASLREWLYFAFLTERQRCKQKGRGAITSGRTWFCFFKYEDARKSVVYDAARQTVSLQIGTIQQVPTTAL.

The chain is Probable early E4 13 kDa protein from Human adenovirus A serotype 12 (HAdV-12).